We begin with the raw amino-acid sequence, 200 residues long: Prolactin-2 (200 aa).

The first 23 residues, methionine 1–alanine 23, serve as a signal peptide directing secretion. Cystine bridges form between cysteine 64-cysteine 173 and cysteine 190-cysteine 200.

Belongs to the somatotropin/prolactin family.

The protein localises to the secreted. This chain is Prolactin-2 (prl2), found in Oreochromis mossambicus (Mozambique tilapia).